Reading from the N-terminus, the 298-residue chain is ATP synthase gamma chain (298 aa).

This sequence belongs to the ATPase gamma chain family. In terms of assembly, F-type ATPases have 2 components, CF(1) - the catalytic core - and CF(0) - the membrane proton channel. CF(1) has five subunits: alpha(3), beta(3), gamma(1), delta(1), epsilon(1). CF(0) has three main subunits: a, b and c.

It is found in the cell inner membrane. Its function is as follows. Produces ATP from ADP in the presence of a proton gradient across the membrane. The gamma chain is believed to be important in regulating ATPase activity and the flow of protons through the CF(0) complex. This Desulfosudis oleivorans (strain DSM 6200 / JCM 39069 / Hxd3) (Desulfococcus oleovorans) protein is ATP synthase gamma chain.